The following is a 397-amino-acid chain: uncharacterized protein (397 aa).

4 helical membrane passes run 22-42 (ILTMLGIIIGVGSVIVVVAVG), 270-290 (IMTTIIGSIAGISLLVGGIGV), 327-347 (VVLTLIGGLVGIGIGYGGAAL), and 362-382 (VVCGGVLFSMLIGVIFGMLPA).

This sequence belongs to the ABC-4 integral membrane protein family. As to quaternary structure, part of a complex composed of YknX, YknY and YknZ. The complex interacts with YknW.

The protein resides in the cell membrane. Its subcellular location is the membrane raft. In terms of biological role, part of an unusual four-component transporter, which is required for protection against the killing factor SdpC (sporulation-delaying protein). This is an uncharacterized protein from Bacillus subtilis (strain 168).